A 389-amino-acid chain; its full sequence is MYKTKGGFQLTLQTLSLVVGFMAWSIIAPLMPFIKQDVNVTEGQISIILAIPVILGSVLRVPFGYLTNIVGAKWVFFTSFIVLLFPIFFLSQAQTPGMLMASGFFLGVGGAIFSVGVTSVPKYFPKEKVGLANGIYGMGNIGTAVSSFLAPPIAGIIGWQTTVRSYLIIIALFALIMFIFGDTQERKIKVPLMAQMKTLSKNYKLYYLSYWYFITFGAFVAFGIFLPNYLVNHFGIDKVDAGIRSGVFIALATFLRPIGGILGDKFNAVKVLMIDFVVMIIGAIILGISDHIALFTVGCLTISICAGIGNGLIFKLVPSYFLNEAGSANGIVSMMGGLGGFFPPLVITYVANLTGSSHLAFIFLAVFGCIALFTMRHLYQKEYGSLKNG.

12 helical membrane passes run 14 to 34, 45 to 65, 69 to 89, 97 to 117, 139 to 159, 161 to 181, 211 to 231, 246 to 266, 268 to 288, 294 to 314, 331 to 351, and 353 to 373; these read TLSL…MPFI, ISII…PFGY, IVGA…PIFF, GMLM…SVGV, GNIG…IIGW, TTVR…FIFG, WYFI…NYLV, GVFI…GDKF, AVKV…ILGI, LFTV…GLIF, IVSM…TYVA, and LTGS…IALF.

It belongs to the major facilitator superfamily. Nitrate/nitrite porter (TC 2.A.1.8) family.

It localises to the cell membrane. Probably required for nitrate uptake under anoxic conditions. Also possibly involved in excretion of nitrite produced by the dissimilatory reduction of nitrate. The polypeptide is Probable nitrate transporter NarT (narT) (Staphylococcus aureus (strain USA300)).